The chain runs to 331 residues: DNA polymerase IV (331 aa).

In terms of domain architecture, UmuC spans 1-174 (FFAAVEMRDN…LPLAKIPGVG (174 aa)). Aspartate 92 is a Mg(2+) binding site. Residue glutamate 93 is part of the active site.

It belongs to the DNA polymerase type-Y family. In terms of assembly, monomer. Requires Mg(2+) as cofactor.

Its subcellular location is the cytoplasm. The catalysed reaction is DNA(n) + a 2'-deoxyribonucleoside 5'-triphosphate = DNA(n+1) + diphosphate. Its function is as follows. Poorly processive, error-prone DNA polymerase involved in untargeted mutagenesis. Copies undamaged DNA at stalled replication forks, which arise in vivo from mismatched or misaligned primer ends. These misaligned primers can be extended by PolIV. Exhibits no 3'-5' exonuclease (proofreading) activity. May be involved in translesional synthesis, in conjunction with the beta clamp from PolIII. The sequence is that of DNA polymerase IV from Escherichia fergusonii.